The following is a 303-amino-acid chain: Ribosomal protein L11 methyltransferase (303 aa).

Thr146, Gly167, Asp189, and Asn236 together coordinate S-adenosyl-L-methionine.

The protein belongs to the methyltransferase superfamily. PrmA family.

Its subcellular location is the cytoplasm. The catalysed reaction is L-lysyl-[protein] + 3 S-adenosyl-L-methionine = N(6),N(6),N(6)-trimethyl-L-lysyl-[protein] + 3 S-adenosyl-L-homocysteine + 3 H(+). Methylates ribosomal protein L11. The polypeptide is Ribosomal protein L11 methyltransferase (Acinetobacter baylyi (strain ATCC 33305 / BD413 / ADP1)).